The primary structure comprises 304 residues: MTVPHFLTLFDLPADEIRQLVRRAIDLKALQRQGKIYEPLKNQVLGMLFEKSSTRTRVSFEVGMIQLGGNAVFLSPRDTQLGRGEPLEDTARVLSRMVDCLMVRTFSHSMLEHFSAYSQVPVINALTDSYHPCQLLADIQTYFEHRGDIQGRTVAWIGDGNNMCQSYINAACQFDFQLHIATPAGYGPDPAILQMARERVQIIAEPREAVRGADLVVTDVWTSMGQEKEKHRRLQDLADYQVNGELMSLAKRDALFMHCLPAHRGEEVSAEVIDGPQSVVWDEAENRLHAQKALLEKLLIGGPL.

Carbamoyl phosphate contacts are provided by residues 53 to 56, Gln-80, Arg-104, and 131 to 134; these read STRT and HPCQ. L-ornithine contacts are provided by residues Asn-162, Asp-219, and 223-224; that span reads SM. Residues 259–260 and Arg-287 contribute to the carbamoyl phosphate site; that span reads CL.

This sequence belongs to the aspartate/ornithine carbamoyltransferase superfamily. OTCase family.

Its subcellular location is the cytoplasm. The enzyme catalyses carbamoyl phosphate + L-ornithine = L-citrulline + phosphate + H(+). Its pathway is amino-acid biosynthesis; L-arginine biosynthesis; L-arginine from L-ornithine and carbamoyl phosphate: step 1/3. Its function is as follows. Reversibly catalyzes the transfer of the carbamoyl group from carbamoyl phosphate (CP) to the N(epsilon) atom of ornithine (ORN) to produce L-citrulline. The chain is Ornithine carbamoyltransferase from Nitrosococcus oceani (strain ATCC 19707 / BCRC 17464 / JCM 30415 / NCIMB 11848 / C-107).